The sequence spans 190 residues: Copper-binding lipoprotein NosL (190 aa).

Positions 1-23 (MNALHRIGAGTLLAVLLAFGLTG) are cleaved as a signal peptide. The N-palmitoyl cysteine moiety is linked to residue C24. C24 carries S-diacylglycerol cysteine lipidation. The segment at 170-190 (MQHGGMHDHAPNGAHNAHAGH) is disordered. Over residues 180 to 190 (PNGAHNAHAGH) the composition is skewed to low complexity.

The protein belongs to the NosL family. In terms of assembly, monomer.

It localises to the cell membrane. May act as a metallochaperone involved in nitrous oxide reductase assembly. Specifically binds Cu(+). The chain is Copper-binding lipoprotein NosL from Stutzerimonas stutzeri (Pseudomonas stutzeri).